A 439-amino-acid chain; its full sequence is MEAIRKQAAKLREQVARQQQAVLKHLGHVNADAVVVDEEELHCHQKLQDLYSSTKAAKRLQRNIVRGLEGFIATGTKVVEIGLKFAEDFKKYGDENPDANTPLSRVAHHFGTSYKSVEGERETLLGVLSEQVCEPIRTMIYSAPLEDARHLVNHYDRLRQEVEAQATDVLRRRSKLKESDISEEAYIKLKNSESRLAELKSSMKTLGKEATKAMLEVDDQQQNVTSQRLRALVEAERSYHRNALDILDKLHSEMIAEEEAIGSSPKSLPLHIEDSASLPQQEPNSNSSGEIKSNPLGKIKASRREEIKSNPQEVTKPSPKDEMKSSPQEETKSNHQKEIKSSPQEEIKKSNGSDDHHNHQLLSQNDSYFLAKVVHPFDAQAPGELSLAVDDYVIVRQVAGTGWSEGEYKGKAGWFPSAYVEKQEKAPASKIVESNSKQQ.

The 232-residue stretch at 32 to 263 folds into the BAR domain; that stretch reads DAVVVDEEEL…MIAEEEAIGS (232 aa). Residues 277–291 are compositionally biased toward polar residues; the sequence is SLPQQEPNSNSSGEI. A disordered region spans residues 277 to 362; sequence SLPQQEPNSN…SDDHHNHQLL (86 aa). The span at 318–358 shows a compositional bias: basic and acidic residues; the sequence is SPKDEMKSSPQEETKSNHQKEIKSSPQEEIKKSNGSDDHHN. Residues 366 to 425 enclose the SH3 domain; sequence DSYFLAKVVHPFDAQAPGELSLAVDDYVIVRQVAGTGWSEGEYKGKAGWFPSAYVEKQEK.

In terms of assembly, interacts with the auxilin-like protein AUXI1. Highly expressed in flowers. Detected in seedlings, roots, leaves and stems.

Its subcellular location is the cytoplasmic vesicle. The protein localises to the clathrin-coated vesicle. It is found in the cell membrane. The protein resides in the golgi apparatus. It localises to the trans-Golgi network. Its subcellular location is the endoplasmic reticulum. In terms of biological role, lipid binding protein bound strongly to phosphatidic acid, phosphatidylinositol-4-phosphate and phosphatidylinositol-4,5-bisphosphate. Binds actin in vitro. Involved in trafficking and modification of clathrin-coated vesicles. The sequence is that of SH3 domain-containing protein 1 (SH3P1) from Arabidopsis thaliana (Mouse-ear cress).